We begin with the raw amino-acid sequence, 390 residues long: Tuftelin (390 aa).

2 coiled-coil regions span residues 88-126 (DKMT…KLDR) and 163-352 (PSMS…EKQV). The interval 356–383 (NFSTQARAKTENLGSVRISKPPSPKPMP) is disordered.

It belongs to the tuftelin family. As to quaternary structure, interacts with TFIP11. May form oligomers. As to expression, ameloblasts, and also non-odontogenic tissues including kidney, lung, liver and testis.

Its subcellular location is the secreted. Its function is as follows. Involved in the structural organization of the epidermis. Involved in the mineralization and structural organization of enamel. This is Tuftelin (Tuft1) from Mus musculus (Mouse).